A 122-amino-acid chain; its full sequence is Large ribosomal subunit protein uL14 (122 aa).

This sequence belongs to the universal ribosomal protein uL14 family. In terms of assembly, part of the 50S ribosomal subunit. Forms a cluster with proteins L3 and L19. In the 70S ribosome, L14 and L19 interact and together make contacts with the 16S rRNA in bridges B5 and B8.

In terms of biological role, binds to 23S rRNA. Forms part of two intersubunit bridges in the 70S ribosome. This Cupriavidus metallidurans (strain ATCC 43123 / DSM 2839 / NBRC 102507 / CH34) (Ralstonia metallidurans) protein is Large ribosomal subunit protein uL14.